Consider the following 4351-residue polypeptide: Protocadherin Fat 2 (4351 aa).

Residues 1 to 18 (MTLVLLGVAMVLLHRAAC) form the signal peptide. The Extracellular segment spans residues 19 to 4050 (EKPLEETITP…IKRGDWGQQE (4032 aa)). Cadherin domains lie at 34–148 (THSL…KPLF) and 149–256 (SPPS…PPVI). N-linked (GlcNAc...) asparagine glycans are attached at residues asparagine 39, asparagine 210, asparagine 280, and asparagine 330. 31 Cadherin domains span residues 363–458 (EKAV…APVF), 459–564 (NRSS…QPMF), 565–669 (EEVN…VPVQ), 716–820 (DHFP…PPRF), 821–925 (PPGG…PPQC), 926–1032 (ITEH…SPHF), 1033–1142 (SSFV…RPVF), 1138–1242 (SRPV…SPMF), 1243–1346 (SHKL…SSIP), 1350–1448 (DESH…RPQF), 1449–1555 (LQDH…SPHF), 1556–1660 (TQPR…APIF), 1661–1758 (SKDE…APAF), 1759–1872 (LKST…PPRF), 1873–1968 (SEQI…SLQF), 1969–2070 (DQDI…IPEF), 2071–2171 (QHLP…NPLF), 2172–2272 (QSPY…PPTF), 2273–2379 (SQLV…PPEF), 2380–2481 (REPQ…SPEF), 2482–2585 (QQNV…APQF), 2586–2692 (KASG…LPKF), 2693–2799 (SEPL…RPVF), 2800–2908 (EADP…PPRF), 2909–3013 (ASED…SPQC), 3014–3115 (SQLL…APRF), 3116–3220 (FPSH…LPIF), 3221–3323 (LNSE…HPRF), 3324–3428 (THDL…PPRF), 3429–3533 (FQLN…PPST), and 3534–3631 (LPLE…APQQ). Residues asparagine 459, asparagine 568, asparagine 627, and asparagine 789 are each glycosylated (N-linked (GlcNAc...) asparagine). A glycan (N-linked (GlcNAc...) asparagine) is linked at asparagine 996. N-linked (GlcNAc...) asparagine glycans are attached at residues asparagine 1175, asparagine 1276, and asparagine 1417. Asparagine 1899, asparagine 1998, asparagine 2007, asparagine 2102, asparagine 2165, asparagine 2183, asparagine 2325, asparagine 2368, asparagine 2387, asparagine 2430, asparagine 2470, asparagine 2547, and asparagine 2597 each carry an N-linked (GlcNAc...) asparagine glycan. Residues asparagine 3127, asparagine 3278, and asparagine 3312 are each glycosylated (N-linked (GlcNAc...) asparagine). N-linked (GlcNAc...) asparagine glycans are attached at residues asparagine 3432, asparagine 3603, asparagine 3770, asparagine 3774, asparagine 3815, asparagine 3842, asparagine 3875, and asparagine 3906. Residues 3775–3946 (GTTWRFSGQS…YLETWALSQC (172 aa)) enclose the Laminin G-like domain. Intrachain disulfides connect cysteine 3914–cysteine 3946, cysteine 3953–cysteine 3964, cysteine 3958–cysteine 3974, and cysteine 3976–cysteine 3985. 2 consecutive EGF-like domains span residues 3949 to 3986 (PGTT…RNCE) and 3988 to 4024 (GREN…DRCE). An N-linked (GlcNAc...) asparagine glycan is attached at asparagine 3991. Cystine bridges form between cysteine 3992-cysteine 4003, cysteine 3997-cysteine 4012, and cysteine 4014-cysteine 4023. A helical transmembrane segment spans residues 4051–4071 (FLVIIVALPLLIIATVGLLLY). Residues 4072 to 4351 (CRRCKSHKPV…DYGSCEEVMF (280 aa)) are Cytoplasmic-facing. The tract at residues 4313–4340 (DCEVNGGPAPGRSQPRAPPNYEGSDMVE) is disordered.

Homodimer.

Its subcellular location is the cell membrane. It localises to the cell junction. It is found in the golgi apparatus. The protein resides in the trans-Golgi network. In terms of biological role, involved in the regulation of cell migration. May be involved in mediating the organization of the parallel fibers of granule cells during cerebellar development. The sequence is that of Protocadherin Fat 2 (Fat2) from Mus musculus (Mouse).